A 764-amino-acid chain; its full sequence is Hemocyte protein-glutamine gamma-glutamyltransferase (764 aa).

Catalysis depends on residues Cys343, His402, and Asp425. Ca(2+) is bound by residues Asn465, Asp467, Glu522, and Glu527.

Belongs to the transglutaminase superfamily. Transglutaminase family. Ca(2+) is required as a cofactor. As to expression, mainly expressed in hemocytes, hepatopancreas, and gastric tissues. On the other hand nothing was detected in the heart, intestine and muscle.

The protein resides in the membrane. It carries out the reaction L-glutaminyl-[protein] + L-lysyl-[protein] = [protein]-L-lysyl-N(6)-5-L-glutamyl-[protein] + NH4(+). In terms of biological role, catalyzes the cross-linking of proteins and the conjugation of polyamines to proteins. This is Hemocyte protein-glutamine gamma-glutamyltransferase from Tachypleus tridentatus (Japanese horseshoe crab).